The following is a 264-amino-acid chain: Signal peptidase I (264 aa).

At 1-18 (MNRDNINSNKTVKQEFGS) the chain is on the cytoplasmic side. Residues 19-39 (FAFVICIALVIRILIMEPFTV) form a helical membrane-spanning segment. Over 40–264 (PTGSMKATIL…IFKNLYNVDE (225 aa)) the chain is Extracellular. Residues serine 43 and lysine 106 contribute to the active site.

It belongs to the peptidase S26 family.

It localises to the cell membrane. The catalysed reaction is Cleavage of hydrophobic, N-terminal signal or leader sequences from secreted and periplasmic proteins.. This chain is Signal peptidase I (lepB), found in Rickettsia prowazekii (strain Madrid E).